The sequence spans 135 residues: Ribonuclease P protein component (135 aa).

Residues Glu-115 to Pro-135 form a disordered region. Over residues Val-122–Pro-135 the composition is skewed to polar residues.

This sequence belongs to the RnpA family. Consists of a catalytic RNA component (M1 or rnpB) and a protein subunit.

The enzyme catalyses Endonucleolytic cleavage of RNA, removing 5'-extranucleotides from tRNA precursor.. RNaseP catalyzes the removal of the 5'-leader sequence from pre-tRNA to produce the mature 5'-terminus. It can also cleave other RNA substrates such as 4.5S RNA. The protein component plays an auxiliary but essential role in vivo by binding to the 5'-leader sequence and broadening the substrate specificity of the ribozyme. The protein is Ribonuclease P protein component of Chloroflexus aggregans (strain MD-66 / DSM 9485).